We begin with the raw amino-acid sequence, 460 residues long: EPD1-interacting receptor-like cytoplasmic serine/threonine-protein kinase 5D (460 aa).

A Protein kinase domain is found at 83–364; the sequence is FSSANFLGEG…DVVNILEPLL (282 aa). Residues 89–97 and Lys118 contribute to the ATP site; that span reads LGEGGFGPV. Phosphotyrosine occurs at positions 163 and 165. Asp213 serves as the catalytic Proton acceptor.

Belongs to the protein kinase superfamily. Ser/Thr protein kinase family. As to quaternary structure, interacts with the V.dahliae elicitor EPD1 (AC G2WWH6). Phosphorylated at Tyr-163 and Tyr-165 in the presence of pathogen-associated molecular patterns (PAMPs); this triggers the expression of pathogenesis-related genes. In terms of tissue distribution, mostly expressed in roots and, to a lesser extent, in leaves.

Its subcellular location is the cell membrane. It catalyses the reaction L-seryl-[protein] + ATP = O-phospho-L-seryl-[protein] + ADP + H(+). The enzyme catalyses L-threonyl-[protein] + ATP = O-phospho-L-threonyl-[protein] + ADP + H(+). In terms of biological role, required for pathogen-associated molecular pattern (PAMP, e.g. chitin and flg22)-triggered immunity (PTI) involving reactive oxygen species (ROS) accumulation and triggering plant defense, including defense-related gene expression (e.g. PR1 and LOX). Ensures specific recognition of the EPD1 effector of Verticillium dahliae, resulting in a hypersensitive response known as effector-triggered immunity (ETI), characterized by the activation of programmed cell death to limit infection by the pathogen. Priming plants with the incompatible pathogen V.dahliae leads to an increased resistance to compatible pathogens, as a result of systemic acquired resistance (SAR). This Gossypium barbadense (Sea Island cotton) protein is EPD1-interacting receptor-like cytoplasmic serine/threonine-protein kinase 5D.